The sequence spans 499 residues: Hepatic triacylglycerol lipase (499 aa).

The signal sequence occupies residues 1–22; that stretch reads MDTSPLCFSILLVLCIFIQSSA. 2 N-linked (GlcNAc...) asparagine glycosylation sites follow: asparagine 42 and asparagine 78. The Nucleophile role is filled by serine 168. The active-site Charge relay system is the aspartate 194. The segment at 254 to 277 is essential for determining substrate specificity; the sequence is CHFLELYRHIAQHGFNAITQTIKC. Catalysis depends on histidine 279, which acts as the Charge relay system. One can recognise a PLAT domain in the interval 352 to 486; it reads YHYQFKIQFI…RPTQEKIFVK (135 aa). N-linked (GlcNAc...) asparagine glycans are attached at residues asparagine 362 and asparagine 397.

This sequence belongs to the AB hydrolase superfamily. Lipase family. As to quaternary structure, homodimer.

The protein resides in the secreted. It catalyses the reaction a triacylglycerol + H2O = a diacylglycerol + a fatty acid + H(+). It carries out the reaction a 1-acyl-sn-glycero-3-phosphocholine + H2O = sn-glycerol 3-phosphocholine + a fatty acid + H(+). The catalysed reaction is a 1,2-diacyl-sn-glycero-3-phosphocholine + H2O = a 2-acyl-sn-glycero-3-phosphocholine + a fatty acid + H(+). The enzyme catalyses 1,2,3-tri-(9Z-octadecenoyl)-glycerol + H2O = di-(9Z)-octadecenoylglycerol + (9Z)-octadecenoate + H(+). It catalyses the reaction 1,2-di-(9Z-octadecenoyl)-sn-glycero-3-phosphocholine + H2O = (9Z-octadecenoyl)-sn-glycero-3-phosphocholine + (9Z)-octadecenoate + H(+). It carries out the reaction 1,2,3-tributanoylglycerol + H2O = dibutanoylglycerol + butanoate + H(+). The catalysed reaction is 1,2-dihexadecanoyl-sn-glycero-3-phosphocholine + H2O = hexadecanoyl-sn-glycero-3-phosphocholine + hexadecanoate + H(+). The enzyme catalyses 1,2-di-(9Z-octadecenoyl)-sn-glycerol + H2O = 2-(9Z-octadecenoyl)-glycerol + (9Z)-octadecenoate + H(+). It catalyses the reaction 1,2,3-tri-(9Z-octadecenoyl)-glycerol + H2O = 2,3-di-(9Z)-octadecenoyl-sn-glycerol + (9Z)-octadecenoate + H(+). It carries out the reaction 1-(9Z-octadecenoyl)-sn-glycero-3-phospho-L-serine + H2O = sn-glycero-3-phospho-L-serine + (9Z)-octadecenoate + H(+). The catalysed reaction is 1-hexadecanoyl-sn-glycero-3-phosphocholine + H2O = sn-glycerol 3-phosphocholine + hexadecanoate + H(+). The enzyme catalyses 1,3-di-(9Z-octadecenoyl)-glycerol + H2O = 3-(9Z-octadecenoyl)-sn-glycerol + (9Z)-octadecenoate + H(+). With respect to regulation, phospholipase A1 and triacylglycerol lipase are inhibited by sphingomyelin. Functionally, catalyzes the hydrolysis of triglycerides and phospholipids present in circulating plasma lipoproteins, including chylomicrons, intermediate density lipoproteins (IDL), low density lipoproteins (LDL) of large size and high density lipoproteins (HDL), releasing free fatty acids (FFA) and smaller lipoprotein particles. Also exhibits lysophospholipase activity. Can hydrolyze both neutral lipid and phospholipid substrates but shows a greater binding affinity for neutral lipid substrates than phospholipid substrates. In native LDL, preferentially hydrolyzes the phosphatidylcholine species containing polyunsaturated fatty acids at sn-2 position. The sequence is that of Hepatic triacylglycerol lipase (LIPC) from Homo sapiens (Human).